Consider the following 591-residue polypeptide: L-lactate dehydrogenase (cytochrome) (591 aa).

Residues 1–80 constitute a mitochondrion transit peptide; it reads MLKYKPLLKI…LNWHNGQIDN (80 aa). Residues 88–165 enclose the Cytochrome b5 heme-binding domain; it reads KQKISPAEVA…APEKKLGPLQ (78 aa). Positions 123, 146, 177, 219, and 223 each coordinate heme b. In terms of domain architecture, FMN hydroxy acid dehydrogenase spans 197 to 563; sequence PPLDNIINLY…KPDLLDLSTL (367 aa). Residue Tyr223 participates in pyruvate binding. FMN is bound by residues 275–278, Ser308, and Gln332; that span reads SATA. Tyr334 provides a ligand contact to pyruvate. Thr360 is an FMN binding site. A heme b-binding site is contributed by Lys376. Residue Lys429 participates in FMN binding. The pyruvate site is built by His453 and Arg456. Residue His453 is the Proton acceptor of the active site. FMN is bound by residues 489–493 and 512–513; these read DGGVR and GR.

It in the N-terminal section; belongs to the cytochrome b5 family. This sequence in the C-terminal section; belongs to the FMN-dependent alpha-hydroxy acid dehydrogenase family. In terms of assembly, homotetramer. The cofactor is FMN. Requires heme b as cofactor.

The protein localises to the mitochondrion intermembrane space. It catalyses the reaction (S)-lactate + 2 Fe(III)-[cytochrome c] = 2 Fe(II)-[cytochrome c] + pyruvate + 2 H(+). Functionally, catalyzes the oxidation of (S)-lactate (L-lactate) to pyruvate with subsequent transfer of electrons to cytochrome c. Is involved in the utilization of (S)-lactate as a sole source of carbon for growth. Can also use ferricyanide as an electron acceptor in vitro. The chain is L-lactate dehydrogenase (cytochrome) (CYB2) from Saccharomyces cerevisiae (strain ATCC 204508 / S288c) (Baker's yeast).